Here is a 718-residue protein sequence, read N- to C-terminus: Threonine--tRNA ligase, mitochondrial (718 aa).

Serine 52 carries the post-translational modification Phosphoserine. The TGS domain maps to 55–121; that stretch reads QKEPRTIKIS…ETDSDLRFLT (67 aa).

The protein belongs to the class-II aminoacyl-tRNA synthetase family. In terms of assembly, homodimer.

The protein resides in the mitochondrion matrix. It catalyses the reaction tRNA(Thr) + L-threonine + ATP = L-threonyl-tRNA(Thr) + AMP + diphosphate + H(+). Its function is as follows. Catalyzes the attachment of threonine to tRNA(Thr) in a two-step reaction: threonine is first activated by ATP to form Thr-AMP and then transferred to the acceptor end of tRNA(Thr). Also edits incorrectly charged tRNA(Thr) via its editing domain. This Homo sapiens (Human) protein is Threonine--tRNA ligase, mitochondrial (TARS2).